The chain runs to 520 residues: Non-specific phospholipase C6 (520 aa).

The first 31 residues, M1–G31, serve as a signal peptide directing secretion.

Belongs to the bacterial phospholipase C family. As to expression, expressed in roots, leaves, stems, flowers and siliques.

It is found in the secreted. The polypeptide is Non-specific phospholipase C6 (NPC6) (Arabidopsis thaliana (Mouse-ear cress)).